Consider the following 392-residue polypeptide: Succinate--CoA ligase [ADP-forming] subunit beta (392 aa).

Residues 9–248 enclose the ATP-grasp domain; it reads KGILKQFGVA…ITEEDPLEYE (240 aa). Residues lysine 50, 57–59, glutamate 103, methionine 106, and glutamate 111 contribute to the ATP site; that span reads GRG. Asparagine 203 and aspartate 217 together coordinate Mg(2+). Substrate contacts are provided by residues asparagine 268 and 325 to 327; that span reads GIV.

The protein belongs to the succinate/malate CoA ligase beta subunit family. In terms of assembly, heterotetramer of two alpha and two beta subunits. The cofactor is Mg(2+).

The catalysed reaction is succinate + ATP + CoA = succinyl-CoA + ADP + phosphate. The enzyme catalyses GTP + succinate + CoA = succinyl-CoA + GDP + phosphate. Its pathway is carbohydrate metabolism; tricarboxylic acid cycle; succinate from succinyl-CoA (ligase route): step 1/1. Succinyl-CoA synthetase functions in the citric acid cycle (TCA), coupling the hydrolysis of succinyl-CoA to the synthesis of either ATP or GTP and thus represents the only step of substrate-level phosphorylation in the TCA. The beta subunit provides nucleotide specificity of the enzyme and binds the substrate succinate, while the binding sites for coenzyme A and phosphate are found in the alpha subunit. In Chlorobaculum parvum (strain DSM 263 / NCIMB 8327) (Chlorobium vibrioforme subsp. thiosulfatophilum), this protein is Succinate--CoA ligase [ADP-forming] subunit beta.